The following is a 482-amino-acid chain: Spore germination protein A1 (482 aa).

Transmembrane regions (helical) follow at residues 242–262, 284–304, 321–341, 351–371, 373–393, and 406–426; these read VAILVDSSPFVLLVPVSLGIL, FASIFITLFLSSIYITLVSFH, ENVPFPPIFEALLMEVTIELL, PLGQTIGLVGGVVIGQAAVEA, LVSSILVIVVSVIALASFTVP, and FISMFSAAILGLYGIILFMLV.

This sequence belongs to the GerABKA family.

It localises to the cell membrane. In terms of biological role, forms a complex at the inner spore membrane which acts as a receptor for L-alanine, thus is involved in the stimulation of germination in response to alanine. Can stimulate germination in the absence of GerD and GerK gene products (fructose and glucose receptors, respectively), but the response is improved in their presence. This is Spore germination protein A1 (gerAA) from Bacillus subtilis (strain 168).